The chain runs to 316 residues: Aquaglyceroporin-2 (316 aa).

Positions 1 to 31 are disordered; that stretch reads MADERGPINKSGPSSTYGATENNGESGGTRG. Residues 1–59 are Cytoplasmic-facing; sequence MADERGPINKSGPSSTYGATENNGESGGTRGAPATEDVIVIQDSGWYYIKFRFKEPFAE. Positions 11 to 24 are enriched in polar residues; sequence SGPSSTYGATENNG. Residues 60 to 80 traverse the membrane as a helical segment; it reads FLGTFILVAFGVGAIAQTVLS. The Extracellular segment spans residues 81–86; the sequence is KGATGN. A helical membrane pass occupies residues 87–107; it reads WITIALGFGLGLALGIAVSGH. Residues 108–131 are Cytoplasmic-facing; it reads YSGGHLNPAVTITLAIYRKFPWVK. The NPA 1 signature appears at 114–116; sequence NPA. The chain crosses the membrane as a helical span at residues 132–152; sequence VPVYITAQVLGAFVAAAVIYL. Residues 153-187 lie on the Extracellular side of the membrane; the sequence is NYLPAIYNFAGDKRDVIGANATAGIFATYPQPFMS. Asn-172 carries an N-linked (GlcNAc...) asparagine glycan. Residues 188-208 traverse the membrane as a helical segment; the sequence is IGGAFFSEALGTFFLLFVILA. The Cytoplasmic segment spans residues 209–219; sequence MTDERNVPTTR. Residues 220-240 traverse the membrane as a helical segment; the sequence is IVAPITIGLTLTAIAISLGFE. Over 241–271 the chain is Extracellular; the sequence is TGFSLNAARDFGPRLFTFFIGYGVEVFTAYK. Positions 246-248 match the NPA 2 motif; it reads NAA. Residues 272 to 292 form a helical membrane-spanning segment; that stretch reads FYFWIPLVAPIVGGLVAGFVY. Over 293–316 the chain is Cytoplasmic; that stretch reads DSLLYWGEKSFLNKNVHHEHRAVA.

The protein belongs to the MIP/aquaporin (TC 1.A.8) family.

It localises to the cell membrane. Its subcellular location is the membrane. The enzyme catalyses H2O(in) = H2O(out). The catalysed reaction is glycerol(in) = glycerol(out). With respect to regulation, polyethylene glycol (PEG) stimulates whereas glycerol inhibits the aquaporin activity. Water channel required to facilitate the transport of water across membranes. Stimulates plant drought tolerance by facilitating the transport of water from the arbuscular mycorrhiza fungus to host plants. This Rhizophagus irregularis (Arbuscular mycorrhizal fungus) protein is Aquaglyceroporin-2.